The following is a 292-amino-acid chain: UDP-N-acetylenolpyruvoylglucosamine reductase (292 aa).

The FAD-binding PCMH-type domain occupies 27–188 (KIGGPVRLFI…LRVGFRIIKG (162 aa)). R166 is a catalytic residue. S217 functions as the Proton donor in the catalytic mechanism. E288 is a catalytic residue.

Belongs to the MurB family. FAD serves as cofactor.

The protein localises to the cytoplasm. The enzyme catalyses UDP-N-acetyl-alpha-D-muramate + NADP(+) = UDP-N-acetyl-3-O-(1-carboxyvinyl)-alpha-D-glucosamine + NADPH + H(+). It functions in the pathway cell wall biogenesis; peptidoglycan biosynthesis. Cell wall formation. This Thermosipho melanesiensis (strain DSM 12029 / CIP 104789 / BI429) protein is UDP-N-acetylenolpyruvoylglucosamine reductase.